A 134-amino-acid chain; its full sequence is 15.4 kDa class V heat shock protein (134 aa).

Positions 19-126 constitute a sHSP domain; the sequence is SLNNYQENHV…LIDPSDVPES (108 aa).

The protein belongs to the small heat shock protein (HSP20) family. May form oligomeric structures.

It is found in the cytoplasm. The polypeptide is 15.4 kDa class V heat shock protein (HSP15.4) (Arabidopsis thaliana (Mouse-ear cress)).